We begin with the raw amino-acid sequence, 340 residues long: NADH-quinone oxidoreductase subunit H (340 aa).

Transmembrane regions (helical) follow at residues 4–24, 78–98, 113–133, 151–171, 184–204, 244–264, 273–293, and 316–336; these read TIGI…PLLL, YLFV…WAVI, VLYL…AGWA, VSYE…AGSM, MLHW…IAGI, SMIL…LSPF, IFFV…FLFV, and VLIP…VAHV.

The protein belongs to the complex I subunit 1 family. As to quaternary structure, NDH-1 is composed of 14 different subunits. Subunits NuoA, H, J, K, L, M, N constitute the membrane sector of the complex.

It is found in the cell inner membrane. The enzyme catalyses a quinone + NADH + 5 H(+)(in) = a quinol + NAD(+) + 4 H(+)(out). NDH-1 shuttles electrons from NADH, via FMN and iron-sulfur (Fe-S) centers, to quinones in the respiratory chain. The immediate electron acceptor for the enzyme in this species is believed to be ubiquinone. Couples the redox reaction to proton translocation (for every two electrons transferred, four hydrogen ions are translocated across the cytoplasmic membrane), and thus conserves the redox energy in a proton gradient. This subunit may bind ubiquinone. The sequence is that of NADH-quinone oxidoreductase subunit H from Legionella pneumophila (strain Paris).